The sequence spans 242 residues: Small ribosomal subunit protein uS2 (242 aa).

Belongs to the universal ribosomal protein uS2 family.

This is Small ribosomal subunit protein uS2 from Shouchella clausii (strain KSM-K16) (Alkalihalobacillus clausii).